We begin with the raw amino-acid sequence, 380 residues long: Cytochrome b (380 aa).

The next 4 helical transmembrane spans lie at 34 to 54 (FGSL…LLAM), 78 to 99 (WLIR…YLHI), 114 to 134 (WNTG…GYVL), and 179 to 199 (FFAL…IHLT). His84 and His98 together coordinate heme b. His183 and His197 together coordinate heme b. Residue His202 participates in a ubiquinone binding. 4 helical membrane-spanning segments follow: residues 227–247 (TKDL…ALFS), 289–309 (LGGV…PFLH), 321–341 (LSQI…WVGS), and 348–368 (FIII…ILFP).

The protein belongs to the cytochrome b family. The cytochrome bc1 complex contains 11 subunits: 3 respiratory subunits (MT-CYB, CYC1 and UQCRFS1), 2 core proteins (UQCRC1 and UQCRC2) and 6 low-molecular weight proteins (UQCRH/QCR6, UQCRB/QCR7, UQCRQ/QCR8, UQCR10/QCR9, UQCR11/QCR10 and a cleavage product of UQCRFS1). This cytochrome bc1 complex then forms a dimer. The cofactor is heme b.

The protein resides in the mitochondrion inner membrane. Component of the ubiquinol-cytochrome c reductase complex (complex III or cytochrome b-c1 complex) that is part of the mitochondrial respiratory chain. The b-c1 complex mediates electron transfer from ubiquinol to cytochrome c. Contributes to the generation of a proton gradient across the mitochondrial membrane that is then used for ATP synthesis. In Aerodramus vulcanorum (Volcano swiftlet), this protein is Cytochrome b (MT-CYB).